We begin with the raw amino-acid sequence, 104 residues long: NADH-quinone oxidoreductase subunit K (104 aa).

3 helical membrane passes run 4–24 (VPASAYLTLAIILFCIGLFGA), 31–51 (VIVLVCIELMLNAANLNLVAF), and 67–87 (LFTMSVAAAEAAVGLAILIAL).

It belongs to the complex I subunit 4L family. NDH-1 is composed of 14 different subunits. Subunits NuoA, H, J, K, L, M, N constitute the membrane sector of the complex.

It localises to the cell membrane. It catalyses the reaction a quinone + NADH + 5 H(+)(in) = a quinol + NAD(+) + 4 H(+)(out). Functionally, NDH-1 shuttles electrons from NADH, via FMN and iron-sulfur (Fe-S) centers, to quinones in the respiratory chain. The immediate electron acceptor for the enzyme in this species is believed to be a menaquinone. Couples the redox reaction to proton translocation (for every two electrons transferred, four hydrogen ions are translocated across the cytoplasmic membrane), and thus conserves the redox energy in a proton gradient. This Bacillus mycoides (strain KBAB4) (Bacillus weihenstephanensis) protein is NADH-quinone oxidoreductase subunit K.